Reading from the N-terminus, the 481-residue chain is UDP-N-acetylmuramoyl-L-alanyl-D-glutamate--L-lysine ligase (481 aa).

Ser-42 is a UDP-N-acetyl-alpha-D-muramoyl-L-alanyl-D-glutamate binding site. 118 to 124 contributes to the ATP binding site; the sequence is GTKGKTT. Residues 160-161, Ser-187, and Arg-195 contribute to the UDP-N-acetyl-alpha-D-muramoyl-L-alanyl-D-glutamate site; that span reads TT. N6-carboxylysine is present on Lys-229. An L-lysine recognition motif motif is present at residues 404 to 407; that stretch reads DDPN.

It belongs to the MurCDEF family. MurE subfamily. Carboxylation is probably crucial for Mg(2+) binding and, consequently, for the gamma-phosphate positioning of ATP.

It is found in the cytoplasm. It carries out the reaction UDP-N-acetyl-alpha-D-muramoyl-L-alanyl-D-glutamate + L-lysine + ATP = UDP-N-acetyl-alpha-D-muramoyl-L-alanyl-gamma-D-glutamyl-L-lysine + ADP + phosphate + H(+). Its pathway is cell wall biogenesis; peptidoglycan biosynthesis. In terms of biological role, catalyzes the addition of L-lysine to the nucleotide precursor UDP-N-acetylmuramoyl-L-alanyl-D-glutamate (UMAG) in the biosynthesis of bacterial cell-wall peptidoglycan. This Streptococcus pneumoniae (strain ATCC BAA-255 / R6) protein is UDP-N-acetylmuramoyl-L-alanyl-D-glutamate--L-lysine ligase.